Here is a 353-residue protein sequence, read N- to C-terminus: Alternative oxidase, mitochondrial (353 aa).

Residues 25–45 (FRSTDDEDENNPSTELATDTT) form a disordered region. Polar residues predominate over residues 35–45 (NPSTELATDTT). Residues 153 to 173 (FLFLESIAGVPGMVAGMIRHL) form a helical membrane-spanning segment. Fe cation contacts are provided by Glu157, Glu196, and His199. The chain crosses the membrane as a helical span at residues 217–237 (LLIGQIIFYNLFFISYLISPA). Glu247, Glu301, and His304 together coordinate Fe cation.

Belongs to the alternative oxidase family. The cofactor is Fe cation.

The protein resides in the mitochondrion inner membrane. Functionally, catalyzes cyanide-resistant oxygen consumption. May increase respiration when the cytochrome respiratory pathway is restricted, or in response to low temperatures. The sequence is that of Alternative oxidase, mitochondrial (AOX) from Yarrowia lipolytica (strain CLIB 122 / E 150) (Yeast).